Reading from the N-terminus, the 338-residue chain is Alanine racemase (338 aa).

Lysine 33 (proton acceptor; specific for D-alanine) is an active-site residue. At lysine 33 the chain carries N6-(pyridoxal phosphate)lysine. Arginine 126 serves as a coordination point for substrate. The active-site Proton acceptor; specific for L-alanine is tyrosine 236. Methionine 284 contributes to the substrate binding site.

The protein belongs to the alanine racemase family. Pyridoxal 5'-phosphate is required as a cofactor.

It carries out the reaction L-alanine = D-alanine. It participates in amino-acid biosynthesis; D-alanine biosynthesis; D-alanine from L-alanine: step 1/1. In terms of biological role, catalyzes the interconversion of L-alanine and D-alanine. May also act on other amino acids. This Aquifex aeolicus (strain VF5) protein is Alanine racemase (alr).